Consider the following 833-residue polypeptide: cGMP-specific 3',5'-cyclic phosphodiesterase (833 aa).

At Ser60 the chain carries Phosphoserine. A disordered region spans residues 82–101 (FLSDSGKKEQMPLTSPRFDS). GAF domains are found at residues 122–272 (DVTA…GIVL) and 304–461 (SLEV…GLGI). The region spanning 494-818 (ETRELQALAA…QKWQALADQQ (325 aa)) is the PDEase domain. His571 (proton donor) is an active-site residue. Residues His575, His611, Asp612, and Asp722 each contribute to the Zn(2+) site. Residue Asp612 coordinates Mg(2+). Residue Gln775 coordinates 3',5'-cyclic GMP.

It belongs to the cyclic nucleotide phosphodiesterase family. It depends on Zn(2+) as a cofactor. Mg(2+) serves as cofactor. Phosphorylation is regulated by binding of cGMP to the two allosteric sites. Phosphorylation by PRKG1 leads to its activation.

It catalyses the reaction 3',5'-cyclic GMP + H2O = GMP + H(+). The protein operates within purine metabolism; 3',5'-cyclic GMP degradation; GMP from 3',5'-cyclic GMP: step 1/1. Functionally, plays a role in signal transduction by regulating the intracellular concentration of cyclic nucleotides. This phosphodiesterase catalyzes the specific hydrolysis of cGMP to 5'-GMP. Specifically regulates nitric-oxide-generated cGMP. This Rattus norvegicus (Rat) protein is cGMP-specific 3',5'-cyclic phosphodiesterase (Pde5a).